Here is a 1059-residue protein sequence, read N- to C-terminus: Zinc finger protein 658 (1059 aa).

Residues 8–79 enclose the KRAB domain; that stretch reads VSFQDVTVEF…EDEFLNQRYP (72 aa). Lys-178 is covalently cross-linked (Glycyl lysine isopeptide (Lys-Gly) (interchain with G-Cter in SUMO2)). Residues 325–347 form a C2H2-type 1; degenerate zinc finger; it reads FESNKCEENFSQSSAHIVHQKTQ. The C2H2-type 2; degenerate zinc finger occupies 352–375; that stretch reads FGEHNECTDALYQKLDFTAHQRIH. Residues 381–406 form a C2H2-type 3; degenerate zinc finger; sequence YLSDEHGKCRKSFYRKAHLIQHQRPH. A C2H2-type 4; degenerate zinc finger spans residues 412 to 434; it reads YQYEECAKSFCSSSHPIQHPGTY. 14 consecutive C2H2-type zinc fingers follow at residues 440–462, 518–540, 546–568, 574–596, 602–624, 630–652, 658–680, 686–708, 714–736, 742–764, 770–792, 798–820, 826–848, and 854–876; these read YECN…LRIH, YECI…QRIH, YECV…QRVH, YECN…QRIH, YECS…HRIH, YECS…QRIH, YECN…QNIH, YECS…RRIH, YECS…ERIH, and YECN…HRIH. Residues 882-904 form a C2H2-type 19; degenerate zinc finger; the sequence is YECNDCGKTFSKTSHLRAHLRTR. C2H2-type zinc fingers lie at residues 910–932, 938–960, 966–988, 994–1016, and 1022–1045; these read YECS…QRVH, YECN…QRIH, and YECD…TRMH.

Belongs to the krueppel C2H2-type zinc-finger protein family.

It localises to the nucleus. Its function is as follows. Mediates transcriptional repression in response to zinc. Represses several genes, including SLC30A5, SLC30A10 and CBWD1, by binding to the zinc transcriptional regulatory element (ZTRE) (5'-C[AC]C[TAG]CC[TC]-N(0-50)-[GA]G[ATC]G[TG]G-3') found in the promoter region. May play a role in the control of ribosome biogenesis, regulating predominantly rRNA levels, as well as those of several ribosomal proteins, thus coordinating this highly zinc-demanding process with the available zinc supply. The polypeptide is Zinc finger protein 658 (ZNF658) (Homo sapiens (Human)).